The chain runs to 487 residues: N-succinylglutamate 5-semialdehyde dehydrogenase (487 aa).

221-226 serves as a coordination point for NAD(+); the sequence is GSSDTG. Residues Glu244 and Cys278 contribute to the active site.

This sequence belongs to the aldehyde dehydrogenase family. AstD subfamily.

The catalysed reaction is N-succinyl-L-glutamate 5-semialdehyde + NAD(+) + H2O = N-succinyl-L-glutamate + NADH + 2 H(+). It participates in amino-acid degradation; L-arginine degradation via AST pathway; L-glutamate and succinate from L-arginine: step 4/5. In terms of biological role, catalyzes the NAD-dependent reduction of succinylglutamate semialdehyde into succinylglutamate. This Burkholderia ambifaria (strain ATCC BAA-244 / DSM 16087 / CCUG 44356 / LMG 19182 / AMMD) (Burkholderia cepacia (strain AMMD)) protein is N-succinylglutamate 5-semialdehyde dehydrogenase.